Reading from the N-terminus, the 201-residue chain is Small ribosomal subunit protein uS4c (201 aa).

Residues 15–44 are disordered; sequence LGALPGLTSKRPRSGSDLRNQSRSGKKSQY. In terms of domain architecture, S4 RNA-binding spans 89-150; sequence MRLDNILFRL…EQRSRALIQN (62 aa).

This sequence belongs to the universal ribosomal protein uS4 family. Part of the 30S ribosomal subunit. Contacts protein S5. The interaction surface between S4 and S5 is involved in control of translational fidelity.

The protein localises to the plastid. The protein resides in the chloroplast. In terms of biological role, one of the primary rRNA binding proteins, it binds directly to 16S rRNA where it nucleates assembly of the body of the 30S subunit. Its function is as follows. With S5 and S12 plays an important role in translational accuracy. The chain is Small ribosomal subunit protein uS4c (rps4) from Calycanthus floridus var. glaucus (Eastern sweetshrub).